Consider the following 447-residue polypeptide: Methionine aminopeptidase 2-2 (447 aa).

The disordered stretch occupies residues 1–89 (MAAQTAPELA…PRIPLTTLFP (89 aa)). Polar residues predominate over residues 15–30 (NKNSGSAEANVVSNGG). The span at 34-47 (DDAENEGDSDDDKD) shows a compositional bias: acidic residues. A compositionally biased stretch (basic residues) spans 59–73 (KKKKKKRSKKKKKAA). Histidine 197 lines the substrate pocket. Residues aspartate 217, aspartate 228, and histidine 297 each coordinate a divalent metal cation. Histidine 305 serves as a coordination point for substrate. A divalent metal cation is bound by residues glutamate 333 and glutamate 428.

It belongs to the peptidase M24A family. Methionine aminopeptidase eukaryotic type 2 subfamily. It depends on Co(2+) as a cofactor. Zn(2+) is required as a cofactor. Requires Mn(2+) as cofactor. Fe(2+) serves as cofactor.

Its subcellular location is the cytoplasm. It catalyses the reaction Release of N-terminal amino acids, preferentially methionine, from peptides and arylamides.. Cotranslationally removes the N-terminal methionine from nascent proteins. The N-terminal methionine is often cleaved when the second residue in the primary sequence is small and uncharged (Met-Ala-, Cys, Gly, Pro, Ser, Thr, or Val). The chain is Methionine aminopeptidase 2-2 from Arthroderma otae (strain ATCC MYA-4605 / CBS 113480) (Microsporum canis).